The sequence spans 80 residues: U19-lycotoxin-Ls1a (80 aa).

The signal sequence occupies residues 1–22 (MSPKVQALIFIVGLITLLAAHA). The propeptide occupies 23–34 (QEELSDNTESER). 4 disulfide bridges follow: Cys-36–Cys-50, Cys-43–Cys-55, Cys-49–Cys-66, and Cys-57–Cys-64.

Belongs to the neurotoxin 02 (plectoxin) family. 05 (U19-lycotoxin) subfamily. In terms of tissue distribution, expressed by the venom gland.

It is found in the secreted. The polypeptide is U19-lycotoxin-Ls1a (Lycosa singoriensis (Wolf spider)).